The chain runs to 274 residues: 2,3,4,5-tetrahydropyridine-2,6-dicarboxylate N-succinyltransferase (274 aa).

Positions 106 and 143 each coordinate substrate.

Belongs to the transferase hexapeptide repeat family. Homotrimer.

The protein localises to the cytoplasm. The catalysed reaction is (S)-2,3,4,5-tetrahydrodipicolinate + succinyl-CoA + H2O = (S)-2-succinylamino-6-oxoheptanedioate + CoA. It participates in amino-acid biosynthesis; L-lysine biosynthesis via DAP pathway; LL-2,6-diaminopimelate from (S)-tetrahydrodipicolinate (succinylase route): step 1/3. This chain is 2,3,4,5-tetrahydropyridine-2,6-dicarboxylate N-succinyltransferase, found in Rickettsia felis (strain ATCC VR-1525 / URRWXCal2) (Rickettsia azadi).